The primary structure comprises 404 residues: AT-hook motif nuclear-localized protein 6 (404 aa).

Residues 40-112 form a disordered region; the sequence is TTVVTPLPPP…TPISSSIPLS (73 aa). A compositionally biased stretch (pro residues) spans 45–55; that stretch reads PLPPPPAPSSA. Low complexity predominate over residues 56–70; that stretch reads PVPTTVTPGSATAST. The Bipartite nuclear localization signal motif lies at 76–84; that stretch reads KKKRGRPRK. The a.T hook DNA-binding region spans 76-88; it reads KKKRGRPRKYAPD. A compositionally biased stretch (low complexity) spans 98–112; sequence PTLSPTPISSSIPLS. The PPC domain occupies 157–299; that stretch reads GANFTTHQFT…RVMEAFAPPQ (143 aa). Residues 365–404 are disordered; sequence AYHGYGNMNTGTTHKEEHEDEDGGDDDDDSGDTRSQSHSG. Residues 382-394 are compositionally biased toward acidic residues; the sequence is HEDEDGGDDDDDS.

It localises to the nucleus. Its function is as follows. Transcription factor that specifically binds AT-rich DNA sequences related to the nuclear matrix attachment regions (MARs). The protein is AT-hook motif nuclear-localized protein 6 of Arabidopsis thaliana (Mouse-ear cress).